The sequence spans 86 residues: KKNMLLVNPIVGIGGLFVGAPMLTANLGISSYAAKKVIDDINTGSAVATIIALVTAVVGGGLITAGIVATTKSLIKKYGAKYSAAW.

Positions 23-86 (LTANLGISSY…KYGAKYSAAW (64 aa)) form a cross-link, cyclopeptide (Leu-Trp).

The protein resides in the secreted. In terms of biological role, cyclopeptide antibiotic with bacteriolytic activity against the Gram-positive bacteria S.aureus and S.thermophilus, and lower activity against the Gram-negative bacteria E.coli and P.aeruginosa. The protein is Bacteriocin thailandicin of Enterococcus thailandicus.